The sequence spans 423 residues: Glutamate-1-semialdehyde 2,1-aminomutase (423 aa).

At lysine 259 the chain carries N6-(pyridoxal phosphate)lysine.

Belongs to the class-III pyridoxal-phosphate-dependent aminotransferase family. HemL subfamily. Pyridoxal 5'-phosphate is required as a cofactor.

It localises to the cytoplasm. The enzyme catalyses (S)-4-amino-5-oxopentanoate = 5-aminolevulinate. It participates in porphyrin-containing compound metabolism; protoporphyrin-IX biosynthesis; 5-aminolevulinate from L-glutamyl-tRNA(Glu): step 2/2. This chain is Glutamate-1-semialdehyde 2,1-aminomutase, found in Methanobrevibacter smithii (strain ATCC 35061 / DSM 861 / OCM 144 / PS).